The following is a 465-amino-acid chain: 23S rRNA (uracil(1939)-C(5))-methyltransferase RlmD (465 aa).

The tract at residues 1 to 22 (MSEAVPTSARKSKNAPVAPGPA) is disordered. In terms of domain architecture, TRAM spans 16–80 (PVAPGPAPVL…PSYEQATVVD (65 aa)). C93, C99, C102, and C181 together coordinate [4Fe-4S] cluster. 6 residues coordinate S-adenosyl-L-methionine: Q289, F318, N323, E339, N367, and D388. C421 functions as the Nucleophile in the catalytic mechanism.

Belongs to the class I-like SAM-binding methyltransferase superfamily. RNA M5U methyltransferase family. RlmD subfamily.

The enzyme catalyses uridine(1939) in 23S rRNA + S-adenosyl-L-methionine = 5-methyluridine(1939) in 23S rRNA + S-adenosyl-L-homocysteine + H(+). In terms of biological role, catalyzes the formation of 5-methyl-uridine at position 1939 (m5U1939) in 23S rRNA. This is 23S rRNA (uracil(1939)-C(5))-methyltransferase RlmD from Burkholderia ambifaria (strain ATCC BAA-244 / DSM 16087 / CCUG 44356 / LMG 19182 / AMMD) (Burkholderia cepacia (strain AMMD)).